The following is a 321-amino-acid chain: uncharacterized protein (321 aa).

The first 18 residues, 1–18, serve as a signal peptide directing secretion; the sequence is MKKMKKLLLLLSASFAFS.

This is an uncharacterized protein from Aquifex aeolicus (strain VF5).